We begin with the raw amino-acid sequence, 367 residues long: tRNA-specific 2-thiouridylase MnmA (367 aa).

ATP contacts are provided by residues 12-19 (GMSGGVDS) and methionine 38. The segment at 98–100 (NPD) is interaction with target base in tRNA. The active-site Nucleophile is the cysteine 103. A disulfide bridge links cysteine 103 with cysteine 200. Glycine 128 is an ATP binding site. An interaction with tRNA region spans residues 150 to 152 (KDQ). Cysteine 200 (cysteine persulfide intermediate) is an active-site residue. The interval 312 to 313 (RY) is interaction with tRNA.

The protein belongs to the MnmA/TRMU family.

The protein resides in the cytoplasm. It carries out the reaction S-sulfanyl-L-cysteinyl-[protein] + uridine(34) in tRNA + AH2 + ATP = 2-thiouridine(34) in tRNA + L-cysteinyl-[protein] + A + AMP + diphosphate + H(+). Its function is as follows. Catalyzes the 2-thiolation of uridine at the wobble position (U34) of tRNA, leading to the formation of s(2)U34. The sequence is that of tRNA-specific 2-thiouridylase MnmA from Psychromonas ingrahamii (strain DSM 17664 / CCUG 51855 / 37).